Here is a 470-residue protein sequence, read N- to C-terminus: Proton-coupled amino acid transporter 3 (470 aa).

The Cytoplasmic portion of the chain corresponds to 1 to 46 (MSLLGRDYNSELNSLDNGPQSPSESSSSITSENVHPAGEAGLSMMQ). Residues 10 to 20 (SELNSLDNGPQ) are compositionally biased toward polar residues. The tract at residues 10–33 (SELNSLDNGPQSPSESSSSITSEN) is disordered. A compositionally biased stretch (low complexity) spans 21 to 31 (SPSESSSSITS). Residues 47–67 (TLIHLLKCNIGTGLLGLPLAI) traverse the membrane as a helical segment. Residues 68 to 71 (KNAG) are Extracellular-facing. A helical transmembrane segment spans residues 72–92 (LLVGPVSLLAIGVLTVHCMVI). Residues 93–137 (LLNCAQHLSQRLQKTFVNYGEATMYGLETCPNTWLRAHAVWGRYT) are Cytoplasmic-facing. A helical transmembrane segment spans residues 138 to 158 (VSFLLVITQLGFCSVYFMFMA). Over 159–185 (DNLQQMVEKAHVTSNICQPREILTLTP) the chain is Extracellular. A helical transmembrane segment spans residues 186-206 (ILDIRFYMLIILPFLILLVFI). Topologically, residues 207–210 (QNLK) are cytoplasmic. A helical membrane pass occupies residues 211 to 231 (VLSVFSTLANITTLGSMALIF). Residues 232–252 (EYIMEGIPYPSNLPLMANWKT) are Extracellular-facing. Residues 253–273 (FLLFFGTAIFTFEGVGMVLPL) traverse the membrane as a helical segment. At 274–284 (KNQMKHPQQFS) the chain is on the cytoplasmic side. The helical transmembrane segment at 285–305 (FVLYLGMSIVIILYILLGTLG) threads the bilayer. Topologically, residues 306-337 (YMKFGSDTQASITLNLPNCWLYQSVKLMYSIG) are extracellular. A helical membrane pass occupies residues 338 to 358 (IFFTYALQFHVPAEIIIPFAI). The Cytoplasmic segment spans residues 359-367 (SQVSESWAL). A helical membrane pass occupies residues 368 to 388 (FVDLSVRSALVCLTCVSAILI). The Extracellular portion of the chain corresponds to 389-392 (PRLD). The chain crosses the membrane as a helical span at residues 393–413 (LVISLVGSVSSSALALIIPAL). Residues 414-425 (LEIVIFYSEDMS) lie on the Cytoplasmic side of the membrane. The chain crosses the membrane as a helical span at residues 426–446 (CVTIAKDIMISIVGLLGCIFG). Over 447-470 (TYQALYELPQPISHSMANSTGVHA) the chain is Extracellular.

The protein belongs to the amino acid/polyamine transporter 2 family. In terms of tissue distribution, specifically expressed in testis.

The protein resides in the membrane. The polypeptide is Proton-coupled amino acid transporter 3 (SLC36A3) (Homo sapiens (Human)).